A 465-amino-acid chain; its full sequence is Glutamate--tRNA ligase (465 aa).

The 'HIGH' region signature appears at 11–21 (PSPTGFIHLGN). Positions 243-247 (KMSKR) match the 'KMSKS' region motif. Lysine 246 is a binding site for ATP.

Belongs to the class-I aminoacyl-tRNA synthetase family. Glutamate--tRNA ligase type 1 subfamily. As to quaternary structure, monomer.

The protein resides in the cytoplasm. The catalysed reaction is tRNA(Glu) + L-glutamate + ATP = L-glutamyl-tRNA(Glu) + AMP + diphosphate. Catalyzes the attachment of glutamate to tRNA(Glu) in a two-step reaction: glutamate is first activated by ATP to form Glu-AMP and then transferred to the acceptor end of tRNA(Glu). This chain is Glutamate--tRNA ligase, found in Cupriavidus metallidurans (strain ATCC 43123 / DSM 2839 / NBRC 102507 / CH34) (Ralstonia metallidurans).